The sequence spans 357 residues: Peptide chain release factor 1 (357 aa).

Gln-234 carries the N5-methylglutamine modification. Basic and acidic residues predominate over residues 284-307; that stretch reads KKQEQRSNDRKQQVGSGDRSERIR. Residues 284–313 form a disordered region; that stretch reads KKQEQRSNDRKQQVGSGDRSERIRTYNFPQ.

It belongs to the prokaryotic/mitochondrial release factor family. Methylated by PrmC. Methylation increases the termination efficiency of RF1.

Its subcellular location is the cytoplasm. In terms of biological role, peptide chain release factor 1 directs the termination of translation in response to the peptide chain termination codons UAG and UAA. This is Peptide chain release factor 1 from Borrelia hermsii (strain HS1 / DAH).